The primary structure comprises 230 residues: Leucyl/phenylalanyl-tRNA--protein transferase (230 aa).

It belongs to the L/F-transferase family.

It localises to the cytoplasm. The catalysed reaction is N-terminal L-lysyl-[protein] + L-leucyl-tRNA(Leu) = N-terminal L-leucyl-L-lysyl-[protein] + tRNA(Leu) + H(+). It carries out the reaction N-terminal L-arginyl-[protein] + L-leucyl-tRNA(Leu) = N-terminal L-leucyl-L-arginyl-[protein] + tRNA(Leu) + H(+). The enzyme catalyses L-phenylalanyl-tRNA(Phe) + an N-terminal L-alpha-aminoacyl-[protein] = an N-terminal L-phenylalanyl-L-alpha-aminoacyl-[protein] + tRNA(Phe). Functionally, functions in the N-end rule pathway of protein degradation where it conjugates Leu, Phe and, less efficiently, Met from aminoacyl-tRNAs to the N-termini of proteins containing an N-terminal arginine or lysine. This Hamiltonella defensa subsp. Acyrthosiphon pisum (strain 5AT) protein is Leucyl/phenylalanyl-tRNA--protein transferase.